A 101-amino-acid chain; its full sequence is Urease subunit beta (101 aa).

Belongs to the urease beta subunit family. Heterotrimer of UreA (gamma), UreB (beta) and UreC (alpha) subunits. Three heterotrimers associate to form the active enzyme.

It is found in the cytoplasm. The enzyme catalyses urea + 2 H2O + H(+) = hydrogencarbonate + 2 NH4(+). Its pathway is nitrogen metabolism; urea degradation; CO(2) and NH(3) from urea (urease route): step 1/1. This is Urease subunit beta from Azoarcus sp. (strain BH72).